Here is a 552-residue protein sequence, read N- to C-terminus: Harmonin (552 aa).

Residues 1-86 (MDRKVAREFR…LTPRRSRKLK (86 aa)) are N-terminal domain. 2 PDZ domains span residues 87 to 169 (EVRL…HIGL) and 211 to 293 (KVFI…AAAG). The tract at residues 194–552 (GVRGSLGSPG…KEYDDELTFF (359 aa)) is mediates interaction with MYO7B. Residue Ser219 is modified to Phosphoserine. A coiled-coil region spans residues 310–377 (RELQRQELLM…EKFKKQWEED (68 aa)). Residues 401–427 (KPKYDQGVEPELEPADDLDGGTEEQGE) form a disordered region. Residues 408–427 (VEPELEPADDLDGGTEEQGE) show a composition bias toward acidic residues. Residues 452–537 (DVRLLRIKKE…QGGDWIDLVV (86 aa)) form the PDZ 3 domain.

In terms of assembly, part of the IMAC/intermicrovillar adhesion complex/intermicrovillar tip-link complex composed of ANKS4B, MYO7B, USH1C, CDHR2 and CDHR5. Part of a complex composed of USH1C, USH1G and MYO7A. Interacts with F-actin. Interacts with USH2A. Interacts with SLC4A7. Interacts (via PDZ1 domain) with the C-terminus of USHBP1. Interacts (via N-terminus and PDZ 2 domain) with CDH23. Interacts with USH1G. Interacts with MYO7B. Interacts with CDHR2 and CDHR5; may mediate their interaction with MYO7B at the microvilli tip. Interacts (via PDZ 1 domain) with ANKS4B. Interacts (via PDZ 1 domain) with DOCK4. As to expression, expressed in small intestine, colon, kidney, eye and weakly in pancreas. Expressed also in vestibule of the inner ear.

The protein resides in the cytoplasm. Its subcellular location is the cytosol. The protein localises to the cytoskeleton. It localises to the cell projection. It is found in the microvillus. In terms of biological role, anchoring/scaffolding protein that is a part of the functional network formed by USH1C, USH1G, CDH23 and MYO7A that mediates mechanotransduction in cochlear hair cells. Required for normal development and maintenance of cochlear hair cell bundles. As part of the intermicrovillar adhesion complex/IMAC plays a role in brush border differentiation, controlling microvilli organization and length. Probably plays a central regulatory role in the assembly of the complex, recruiting CDHR2, CDHR5 and MYO7B to the microvilli tips. This is Harmonin (USH1C) from Homo sapiens (Human).